The chain runs to 1009 residues: Ulvan lyase, long isoform (1009 aa).

A signal peptide spans 1-32; that stretch reads MTAQKSKYFNRIMTMNTLLFSLLTVGFSQAYA. 137 to 138 provides a ligand contact to substrate; that stretch reads SH. Residue His-138 is the Proton donor/acceptor of the active site. 3 residues coordinate Ca(2+): Asp-200, Asp-210, and Lys-212. The substrate site is built by Tyr-291 and Arg-308. Residues Asp-311, Asp-314, and Tyr-316 each coordinate Ca(2+). Position 372 (Tyr-372) interacts with substrate.

This sequence belongs to the polysaccharide lyase 24 family.

Ulvan lyase involved in ulvan degradation. Ulvan is the main polysaccharide component of the Ulvales (green seaweed) cell wall. It is composed of disaccharide building blocks comprising 3-sulfated rhamnose (Rha3S) linked to D-glucuronic acid (GlcA), L-iduronic acid (IduA), or D-xylose (Xyl). Ulvan lyase catalyzes preferentially the endolytic cleavage of the glycosidic bond between Rha3S and the uronic acid GlcA, but not IduA, producing oligosaccharides that have unsaturated 4-deoxy-L-threo-hex-4-enopyranosiduronic acid (deltaUA) at the non-reducing end. The most abundant end products in the degradation of the ulvan polysaccharide were deltaUA-Rha3S disaccharides and deltaUA-Rha3S-IduA-Rha3S and deltaUA-Rha3S-Xyl-Rha3S tetrasaccharides. This is Ulvan lyase, long isoform (ullA) from Glaciecola sp. (strain KUL10).